Consider the following 348-residue polypeptide: Ethanol acetyltransferase 2 (348 aa).

The transit peptide at 1 to 19 (MIFNSLSIKRLSSTXTSLP) directs the protein to the mitochondrion. An AB hydrolase-1 domain is found at 49–305 (IIFLHGIYGY…VMKERPQEYI (257 aa)). Residues Ser121, Asp145, and His294 each act as charge relay system in the active site.

Belongs to the AB hydrolase superfamily.

The protein resides in the mitochondrion. The enzyme catalyses ethanol + acetyl-CoA = ethyl acetate + CoA. The catalysed reaction is acetyl-CoA + H2O = acetate + CoA + H(+). It catalyses the reaction ethyl acetate + H2O = ethanol + acetate + H(+). Alcohol acetyltransferase that catalyzes the synthesis of ethyl acetate from ethanol and acetyl-CoA. Can also function as a thioesterase by hydrolyzing acetyl-CoA in the absence of ethanol, as well as esterase hydrolyzing ethyl acetate. The chain is Ethanol acetyltransferase 2 (EAT2) from Hanseniaspora uvarum (Yeast).